Reading from the N-terminus, the 501-residue chain is Putative BTB/POZ domain-containing protein L107 (501 aa).

The region spanning 16–87 is the BTB domain; that stretch reads TDLELTLVDS…FYITDIERSQ (72 aa).

It belongs to the mimivirus BTB/WD family.

The chain is Putative BTB/POZ domain-containing protein L107 from Acanthamoeba polyphaga mimivirus (APMV).